The following is a 137-amino-acid chain: Small ribosomal subunit protein uS12 (137 aa).

Positions 1–55 (MPTINQLVRKPRQSKSKKSDSPALNRNFNSKKKKFTDLNSPQKRGVCTRVGTMTP) are disordered. Aspartate 102 carries the post-translational modification 3-methylthioaspartic acid. Residues 118 to 137 (SGVDGRRQGRSLYGTKKPKK) form a disordered region.

It belongs to the universal ribosomal protein uS12 family. In terms of assembly, part of the 30S ribosomal subunit. Contacts proteins S8 and S17. May interact with IF1 in the 30S initiation complex.

With S4 and S5 plays an important role in translational accuracy. In terms of biological role, interacts with and stabilizes bases of the 16S rRNA that are involved in tRNA selection in the A site and with the mRNA backbone. Located at the interface of the 30S and 50S subunits, it traverses the body of the 30S subunit contacting proteins on the other side and probably holding the rRNA structure together. The combined cluster of proteins S8, S12 and S17 appears to hold together the shoulder and platform of the 30S subunit. The protein is Small ribosomal subunit protein uS12 of Staphylococcus saprophyticus subsp. saprophyticus (strain ATCC 15305 / DSM 20229 / NCIMB 8711 / NCTC 7292 / S-41).